Reading from the N-terminus, the 325-residue chain is uncharacterized protein (325 aa).

The interval Met1 to Gln75 is disordered. The span at Tyr24–Tyr70 shows a compositional bias: pro residues. 4 helical membrane passes run Ala96 to Ala116, Ile153 to Ile173, Leu205 to Phe225, and Leu273 to Ile293.

The protein to M.tuberculosis Rv2560.

The protein localises to the cell membrane. This is an uncharacterized protein from Mycobacterium bovis (strain ATCC BAA-935 / AF2122/97).